A 144-amino-acid chain; its full sequence is MPPKKKKVTGLIKLQIQAGAANPAPPVGPALGQHGVNIMEFCKAYNAATESQRGWVIPVEITVYEDRSFTFITKTPPAAKMILKAAGVEKGSGEPHKTKVAKITQAQVREIATTKLPDLNANDLDAASKIIAGTARSMGITVEG.

This sequence belongs to the universal ribosomal protein uL11 family. In terms of assembly, part of the ribosomal stalk of the 50S ribosomal subunit. Interacts with L10 and the large rRNA to form the base of the stalk. L10 forms an elongated spine to which L12 dimers bind in a sequential fashion forming a multimeric L10(L12)X complex. One or more lysine residues are methylated.

Forms part of the ribosomal stalk which helps the ribosome interact with GTP-bound translation factors. The protein is Large ribosomal subunit protein uL11 of Streptomyces avermitilis (strain ATCC 31267 / DSM 46492 / JCM 5070 / NBRC 14893 / NCIMB 12804 / NRRL 8165 / MA-4680).